A 39-amino-acid polypeptide reads, in one-letter code: Photosystem II reaction center protein J (39 aa).

A helical transmembrane segment spans residues 7–27 (IPLWIVATVAGTGALVVVGLF).

It belongs to the PsbJ family. As to quaternary structure, PSII is composed of 1 copy each of membrane proteins PsbA, PsbB, PsbC, PsbD, PsbE, PsbF, PsbH, PsbI, PsbJ, PsbK, PsbL, PsbM, PsbT, PsbX, PsbY, PsbZ, Psb30/Ycf12, peripheral proteins PsbO, CyanoQ (PsbQ), PsbU, PsbV and a large number of cofactors. It forms dimeric complexes.

The protein localises to the cellular thylakoid membrane. In terms of biological role, one of the components of the core complex of photosystem II (PSII). PSII is a light-driven water:plastoquinone oxidoreductase that uses light energy to abstract electrons from H(2)O, generating O(2) and a proton gradient subsequently used for ATP formation. It consists of a core antenna complex that captures photons, and an electron transfer chain that converts photonic excitation into a charge separation. This is Photosystem II reaction center protein J from Synechococcus sp. (strain ATCC 27144 / PCC 6301 / SAUG 1402/1) (Anacystis nidulans).